A 547-amino-acid polypeptide reads, in one-letter code: Chaperonin GroEL (547 aa).

Residues 30–33 (TLGP), lysine 51, 87–91 (DGTTT), glycine 415, and aspartate 496 each bind ATP.

The protein belongs to the chaperonin (HSP60) family. As to quaternary structure, forms a cylinder of 14 subunits composed of two heptameric rings stacked back-to-back. Interacts with the co-chaperonin GroES.

The protein resides in the cytoplasm. The enzyme catalyses ATP + H2O + a folded polypeptide = ADP + phosphate + an unfolded polypeptide.. In terms of biological role, together with its co-chaperonin GroES, plays an essential role in assisting protein folding. The GroEL-GroES system forms a nano-cage that allows encapsulation of the non-native substrate proteins and provides a physical environment optimized to promote and accelerate protein folding. This Histophilus somni (strain 129Pt) (Haemophilus somnus) protein is Chaperonin GroEL.